We begin with the raw amino-acid sequence, 652 residues long: Bifunctional protein ThiO/ThiG (652 aa).

Residues 1–366 (MTRDIVIIGG…HYSRSQKQAS (366 aa)) are thiO. FAD-binding positions include 5 to 19 (IVII…AIAV) and 44 to 46 (AGM). Glu-52 is a binding site for glycine. An FAD-binding site is contributed by Val-173. Glycine is bound by residues Arg-301 and Arg-327. 325–331 (HYRNGIL) provides a ligand contact to FAD. Residues 393–652 (PLIIAGKSFH…ASSPVTGTIS (260 aa)) form a thiG region. Lys-494 serves as the catalytic Schiff-base intermediate with DXP. Residues Gly-555, 581–582 (AG), and 603–604 (NS) contribute to the 1-deoxy-D-xylulose 5-phosphate site.

In the N-terminal section; belongs to the DAO family. ThiO subfamily. It in the C-terminal section; belongs to the ThiG family. Interacts with ThiH and ThiS. The cofactor is FAD.

It is found in the cytoplasm. The enzyme catalyses glycine + O2 + H2O = glyoxylate + H2O2 + NH4(+). The catalysed reaction is [ThiS sulfur-carrier protein]-C-terminal-Gly-aminoethanethioate + 2-iminoacetate + 1-deoxy-D-xylulose 5-phosphate = [ThiS sulfur-carrier protein]-C-terminal Gly-Gly + 2-[(2R,5Z)-2-carboxy-4-methylthiazol-5(2H)-ylidene]ethyl phosphate + 2 H2O + H(+). It functions in the pathway cofactor biosynthesis; thiamine diphosphate biosynthesis. In terms of biological role, catalyzes the FAD-dependent oxidative deamination of glycine. Is essential for thiamine biosynthesis since the oxidation of glycine catalyzed by ThiO generates the glycine imine intermediate (dehydroglycine) required for the biosynthesis of the thiazole ring of thiamine pyrophosphate. Functionally, catalyzes the rearrangement of 1-deoxy-D-xylulose 5-phosphate (DXP) to produce the thiazole phosphate moiety of thiamine. Sulfur is provided by the thiocarboxylate moiety of the carrier protein ThiS. In vitro, sulfur can be provided by H(2)S. This chain is Bifunctional protein ThiO/ThiG (thiO/thiG), found in Nostoc sp. (strain PCC 7120 / SAG 25.82 / UTEX 2576).